The chain runs to 252 residues: Triosephosphate isomerase (252 aa).

Substrate is bound at residue 11-13; sequence NWK. The active-site Electrophile is the H97. E169 functions as the Proton acceptor in the catalytic mechanism. Substrate contacts are provided by residues G175, S215, and 236-237; that span reads GG.

The protein belongs to the triosephosphate isomerase family. In terms of assembly, homodimer.

It is found in the cytoplasm. The enzyme catalyses D-glyceraldehyde 3-phosphate = dihydroxyacetone phosphate. The protein operates within carbohydrate biosynthesis; gluconeogenesis. It participates in carbohydrate degradation; glycolysis; D-glyceraldehyde 3-phosphate from glycerone phosphate: step 1/1. In terms of biological role, involved in the gluconeogenesis. Catalyzes stereospecifically the conversion of dihydroxyacetone phosphate (DHAP) to D-glyceraldehyde-3-phosphate (G3P). This is Triosephosphate isomerase from Mycoplasmoides gallisepticum (strain R(low / passage 15 / clone 2)) (Mycoplasma gallisepticum).